Here is a 102-residue protein sequence, read N- to C-terminus: Nuclear protein 2 (102 aa).

Disordered stretches follow at residues 1 to 26 (MDPP…ALPT) and 46 to 102 (PASG…TRLA). Basic residues predominate over residues 85–102 (QRKRRQRQLQPRPRTRLA).

It belongs to the NUPR family.

It localises to the nucleus. In terms of biological role, acts as a transcriptional repressor by inhibiting gene expression at the NUPR1 promoter in a p53/TP53-dependent manner in cancer cells. Involved in the G1 cell cycle arrest, and in a decrease in cell viability and cell proliferation of pancreatic cancer cells. Plays a role as a negative regulator of the protumoral factor NUPR1. The chain is Nuclear protein 2 from Mus musculus (Mouse).